A 633-amino-acid chain; its full sequence is Beta-myrcene synthase TPS15CT (633 aa).

Residues 1–55 constitute a chloroplast transit peptide; it reads MHCMAVHQFSPSIVSSLPTISTYNNNHFCRFFTPKTSISPISKTKSKSSTCYPIQ. R344, D381, D385, R525, and D528 together coordinate (2E)-geranyl diphosphate. 2 residues coordinate Mg(2+): D381 and D385. The DDXXD motif motif lies at 381–385; that stretch reads DDIYD. D528, T532, and E536 together coordinate Mg(2+).

Belongs to the terpene synthase family. Tpsb subfamily. It depends on Mg(2+) as a cofactor. Requires Mn(2+) as cofactor.

The protein localises to the plastid. The protein resides in the chloroplast. The enzyme catalyses (2E)-geranyl diphosphate = beta-myrcene + diphosphate. Its pathway is secondary metabolite biosynthesis; terpenoid biosynthesis. Involved in monoterpene (C10) olefins biosynthesis, constituants of cannabinoids and terpenoids-rich resins. Catalyzes strictly the conversion of (2E)-geranyl diphosphate to beta-myrcene. In Cannabis sativa (Hemp), this protein is Beta-myrcene synthase TPS15CT.